The sequence spans 338 residues: Holliday junction branch migration complex subunit RuvB (338 aa).

Basic and acidic residues predominate over residues Met1 to Gly14. The segment at Met1–Glu21 is disordered. The tract at residues Asn3–Tyr185 is large ATPase domain (RuvB-L). Residues Leu24, Arg25, Gly66, Lys69, Thr70, Thr71, Glu132 to Tyr134, Arg175, Tyr185, and Arg222 contribute to the ATP site. Thr70 provides a ligand contact to Mg(2+). The small ATPAse domain (RuvB-S) stretch occupies residues Thr186–Gln256. The segment at Asp259 to Asn338 is head domain (RuvB-H). 2 residues coordinate DNA: Arg314 and Arg319.

It belongs to the RuvB family. As to quaternary structure, homohexamer. Forms an RuvA(8)-RuvB(12)-Holliday junction (HJ) complex. HJ DNA is sandwiched between 2 RuvA tetramers; dsDNA enters through RuvA and exits via RuvB. An RuvB hexamer assembles on each DNA strand where it exits the tetramer. Each RuvB hexamer is contacted by two RuvA subunits (via domain III) on 2 adjacent RuvB subunits; this complex drives branch migration. In the full resolvosome a probable DNA-RuvA(4)-RuvB(12)-RuvC(2) complex forms which resolves the HJ.

It is found in the cytoplasm. The catalysed reaction is ATP + H2O = ADP + phosphate + H(+). The RuvA-RuvB-RuvC complex processes Holliday junction (HJ) DNA during genetic recombination and DNA repair, while the RuvA-RuvB complex plays an important role in the rescue of blocked DNA replication forks via replication fork reversal (RFR). RuvA specifically binds to HJ cruciform DNA, conferring on it an open structure. The RuvB hexamer acts as an ATP-dependent pump, pulling dsDNA into and through the RuvAB complex. RuvB forms 2 homohexamers on either side of HJ DNA bound by 1 or 2 RuvA tetramers; 4 subunits per hexamer contact DNA at a time. Coordinated motions by a converter formed by DNA-disengaged RuvB subunits stimulates ATP hydrolysis and nucleotide exchange. Immobilization of the converter enables RuvB to convert the ATP-contained energy into a lever motion, pulling 2 nucleotides of DNA out of the RuvA tetramer per ATP hydrolyzed, thus driving DNA branch migration. The RuvB motors rotate together with the DNA substrate, which together with the progressing nucleotide cycle form the mechanistic basis for DNA recombination by continuous HJ branch migration. Branch migration allows RuvC to scan DNA until it finds its consensus sequence, where it cleaves and resolves cruciform DNA. This chain is Holliday junction branch migration complex subunit RuvB, found in Limosilactobacillus reuteri (strain DSM 20016) (Lactobacillus reuteri).